The chain runs to 536 residues: Inactive beta-amylase 9 (536 aa).

Phosphoserine is present on serine 47. Residues 511 to 536 (QASEAEVEAETASIGSGTGAPSLQTA) form a disordered region.

Belongs to the glycosyl hydrolase 14 family. Mostly expressed in young floral buds, flowers and roots, and, to a later extent, in stems and leaves.

It localises to the cytoplasm. The polypeptide is Inactive beta-amylase 9 (BAM9) (Arabidopsis thaliana (Mouse-ear cress)).